We begin with the raw amino-acid sequence, 340 residues long: Protein-lysine N-methyltransferase EEF2KMT (340 aa).

An N-acetylmethionine modification is found at methionine 1. S-adenosyl-L-methionine-binding positions include tryptophan 139, 165-167 (GSG), tryptophan 238, and alanine 257.

This sequence belongs to the class I-like SAM-binding methyltransferase superfamily. EEF2KMT family. As to quaternary structure, interacts with FAM86B2 and FAM86C1P.

It is found in the cytoplasm. It carries out the reaction L-lysyl-[protein] + 3 S-adenosyl-L-methionine = N(6),N(6),N(6)-trimethyl-L-lysyl-[protein] + 3 S-adenosyl-L-homocysteine + 3 H(+). Functionally, catalyzes the trimethylation of eukaryotic elongation factor 2 (EEF2) on 'Lys-525'. The protein is Protein-lysine N-methyltransferase EEF2KMT (EEF2KMT) of Bos taurus (Bovine).